We begin with the raw amino-acid sequence, 218 residues long: Pyridoxine/pyridoxamine 5'-phosphate oxidase (218 aa).

Substrate-binding positions include 12–15 and Arg-70; that span reads RLSY. FMN-binding positions include 65–70, 80–81, Lys-87, and Gln-109; these read RTVLLR and YT. Residues Tyr-127, Arg-131, and Ser-135 each contribute to the substrate site. Residues 145-146 and Trp-191 each bind FMN; that span reads QS. Substrate is bound at residue 197 to 199; the sequence is RLH. Residue Arg-201 participates in FMN binding.

This sequence belongs to the pyridoxamine 5'-phosphate oxidase family. As to quaternary structure, homodimer. Requires FMN as cofactor.

It carries out the reaction pyridoxamine 5'-phosphate + O2 + H2O = pyridoxal 5'-phosphate + H2O2 + NH4(+). The catalysed reaction is pyridoxine 5'-phosphate + O2 = pyridoxal 5'-phosphate + H2O2. It participates in cofactor metabolism; pyridoxal 5'-phosphate salvage; pyridoxal 5'-phosphate from pyridoxamine 5'-phosphate: step 1/1. The protein operates within cofactor metabolism; pyridoxal 5'-phosphate salvage; pyridoxal 5'-phosphate from pyridoxine 5'-phosphate: step 1/1. Its function is as follows. Catalyzes the oxidation of either pyridoxine 5'-phosphate (PNP) or pyridoxamine 5'-phosphate (PMP) into pyridoxal 5'-phosphate (PLP). In Acinetobacter baumannii (strain SDF), this protein is Pyridoxine/pyridoxamine 5'-phosphate oxidase.